A 221-amino-acid chain; its full sequence is Octanoyltransferase (221 aa).

In terms of domain architecture, BPL/LPL catalytic spans 35 to 221 (ESYENRIIFC…RELLAALLSK (187 aa)). Residues 80–87 (RGGDITYH), 152–154 (AIG), and 165–167 (GLA) contribute to the substrate site. Cysteine 183 serves as the catalytic Acyl-thioester intermediate.

Belongs to the LipB family.

The protein resides in the cytoplasm. It catalyses the reaction octanoyl-[ACP] + L-lysyl-[protein] = N(6)-octanoyl-L-lysyl-[protein] + holo-[ACP] + H(+). Its pathway is protein modification; protein lipoylation via endogenous pathway; protein N(6)-(lipoyl)lysine from octanoyl-[acyl-carrier-protein]: step 1/2. Its function is as follows. Catalyzes the transfer of endogenously produced octanoic acid from octanoyl-acyl-carrier-protein onto the lipoyl domains of lipoate-dependent enzymes. Lipoyl-ACP can also act as a substrate although octanoyl-ACP is likely to be the physiological substrate. In Bacteroides fragilis (strain ATCC 25285 / DSM 2151 / CCUG 4856 / JCM 11019 / LMG 10263 / NCTC 9343 / Onslow / VPI 2553 / EN-2), this protein is Octanoyltransferase.